The primary structure comprises 174 residues: Early nodulin-11 (174 aa).

Positions Met1 to Ala25 are cleaved as a signal peptide. The interval Ser28–Phe174 is disordered. The span at Tyr53–Lys65 shows a compositional bias: pro residues. Residues Lys70 to Leu83 are compositionally biased toward low complexity. Residues Pro122–Pro132 are compositionally biased toward basic residues. Pro residues-rich tracts occupy residues Asn134–Lys150 and Lys159–Phe174.

The protein belongs to the plant proline-rich protein superfamily. As to expression, expressed in cotyledons, leaf vasculature, stomatal guard cells and trichomes. In the embryo, expressed in embryo suspensors, the epidermis and underlying tissues of the cotyledons, hypocotyls, and radicle in maturing embryos, and the outer cell layer of the endosperm.

Its subcellular location is the secreted. It localises to the cell wall. Functionally, involved in the infection process during the plant-rhizobium interaction. Involved in actinorhizal root nodulation. Involved in symbiotic association with the nitrogen-fixing actinomycete Frankia spp. In Medicago truncatula (Barrel medic), this protein is Early nodulin-11.